The chain runs to 477 residues: Zinc metalloproteinase/disintegrin (477 aa).

A signal peptide spans 1 to 20 (MIEVLLVTICLAAFPYQGSS). Positions 21-187 (IILESGNVND…PIKKASQSNL (167 aa)) are excised as a propeptide. The Peptidase M12B domain maps to 193-389 (RYIELFLVVD…DNPQCILNKQ (197 aa)). Ca(2+) contacts are provided by glutamate 196 and aspartate 280. 3 disulfides stabilise this stretch: cysteine 304-cysteine 384, cysteine 344-cysteine 368, and cysteine 346-cysteine 351. Histidine 329 lines the Zn(2+) pocket. Residue glutamate 330 is part of the active site. Zn(2+) contacts are provided by histidine 333 and histidine 339. Residues cysteine 384 and asparagine 387 each coordinate Ca(2+). Positions 390–404 (LRTDTVSTPVSGKNF) are excised as a propeptide. In terms of domain architecture, Disintegrin spans 396-477 (STPVSGKNFG…AGCPRNPFHA (82 aa)). Disulfide bonds link cysteine 410-cysteine 425, cysteine 412-cysteine 420, cysteine 419-cysteine 442, cysteine 433-cysteine 439, cysteine 438-cysteine 463, and cysteine 451-cysteine 470. The short motif at 455–457 (RGD) is the Cell attachment site element.

This sequence belongs to the venom metalloproteinase (M12B) family. P-II subfamily. P-IIa sub-subfamily. As to quaternary structure, monomer. Zn(2+) serves as cofactor. In terms of tissue distribution, expressed by the venom gland.

The protein localises to the secreted. With respect to regulation, inhibited by 1,10-phenanthroline and EDTA. In terms of biological role, impairs hemostasis in the envenomed animal. Does not exhibit detectable plasminogen activating activity. Has hemagglutinating activity on red blood cells. Cleaves insulin B chain at '38-Ala-|-Leu-39' and '40-Tyr-|-Leu-41' bonds. This recombinant protein shows high inhibitory activity on collagen-induced platelet aggregation. The chain is Zinc metalloproteinase/disintegrin from Bothrops jararaca (Jararaca).